We begin with the raw amino-acid sequence, 214 residues long: Octanoyltransferase (214 aa).

Residues 32-207 (EDTLDEIWLV…NLLALLNHPP (176 aa)) form the BPL/LPL catalytic domain. Residues 71–78 (RGGQVTYH), 138–140 (SLG), and 151–153 (GLA) each bind substrate. Catalysis depends on Cys169, which acts as the Acyl-thioester intermediate.

Belongs to the LipB family.

It is found in the cytoplasm. The catalysed reaction is octanoyl-[ACP] + L-lysyl-[protein] = N(6)-octanoyl-L-lysyl-[protein] + holo-[ACP] + H(+). The protein operates within protein modification; protein lipoylation via endogenous pathway; protein N(6)-(lipoyl)lysine from octanoyl-[acyl-carrier-protein]: step 1/2. Catalyzes the transfer of endogenously produced octanoic acid from octanoyl-acyl-carrier-protein onto the lipoyl domains of lipoate-dependent enzymes. Lipoyl-ACP can also act as a substrate although octanoyl-ACP is likely to be the physiological substrate. This is Octanoyltransferase from Klebsiella pneumoniae (strain 342).